Consider the following 248-residue polypeptide: Pulmonary surfactant-associated protein A (248 aa).

The N-terminal stretch at 1–17 (MWLRCLALALTLLMVSG) is a signal peptide. Asn-20 carries an N-linked (GlcNAc...) asparagine glycan. One can recognise a Collagen-like domain in the interval 28-100 (GNPGIPGTPG…PGERGPPGLP (73 aa)). The disordered stretch occupies residues 29-103 (NPGIPGTPGS…RGPPGLPASL (75 aa)). 4-hydroxyproline is present on residues Pro-30, Pro-33, Pro-36, Pro-42, Pro-54, Pro-57, Pro-63, Pro-67, and Pro-70. Over residues 42 to 51 (PGRDGRDGVK) the composition is skewed to basic and acidic residues. Residues 54–65 (PGPPGPLGPPGG) show a composition bias toward pro residues. A compositionally biased stretch (basic and acidic residues) spans 84-93 (ERGEKGEPGE). The region spanning 132–248 (LVVGRKVFSS…LQYRLAICEF (117 aa)) is the C-type lectin domain. 2 disulfide bridges follow: Cys-155/Cys-246 and Cys-224/Cys-238. Asn-207 is a glycosylation site (N-linked (GlcNAc...) asparagine). The Ca(2+) site is built by Glu-215, Arg-217, and Asn-234.

Belongs to the SFTPA family. Oligomeric complex of 6 set of homotrimers.

It localises to the secreted. Its subcellular location is the extracellular space. It is found in the extracellular matrix. The protein resides in the surface film. In presence of calcium ions, it binds to surfactant phospholipids and contributes to lower the surface tension at the air-liquid interface in the alveoli of the mammalian lung and is essential for normal respiration. Enhances the expression of MYO18A/SP-R210 on alveolar macrophages. The protein is Pulmonary surfactant-associated protein A (SFTPA1) of Canis lupus familiaris (Dog).